Reading from the N-terminus, the 152-residue chain is Acyl carrier protein, mitochondrial (152 aa).

Residues 73 to 148 (KLINERVLLV…DIIKYVADKE (76 aa)) form the Carrier domain. S108 bears the O-(pantetheine 4'-phosphoryl)serine mark.

Belongs to the acyl carrier protein (ACP) family. As to quaternary structure, complex I is composed of about 45 different subunits.

Its subcellular location is the mitochondrion. Its function is as follows. Carrier of the growing fatty acid chain in fatty acid biosynthesis. Accessory and non-catalytic subunit of the mitochondrial membrane respiratory chain NADH dehydrogenase (Complex I), which functions in the transfer of electrons from NADH to the respiratory chain. The polypeptide is Acyl carrier protein, mitochondrial (Drosophila melanogaster (Fruit fly)).